A 169-amino-acid polypeptide reads, in one-letter code: Cilia- and flagella-associated protein 276 (169 aa).

Disordered regions lie at residues 26-45 (SKKL…EPWS) and 150-169 (HTAA…FFST). The span at 36 to 45 (HLAQQQEPWS) shows a compositional bias: polar residues. The segment covering 160–169 (RKKDGGFFST) has biased composition (basic and acidic residues).

As to quaternary structure, microtubule inner protein component of sperm flagellar doublet microtubules. As to expression, expressed in cerebrum, cerebellum, gastrocnemius muscle, spinal cord and lung tissues.

Its subcellular location is the cytoplasm. It localises to the cytoskeleton. The protein localises to the flagellum axoneme. It is found in the cilium axoneme. Functionally, microtubule inner protein (MIP) part of the dynein-decorated doublet microtubules (DMTs) in cilia axoneme, which is required for motile cilia beating. May play an important role for the maintenance of myelin-axon integrity. May affect intracellular Ca(2+) homeostasis. This Homo sapiens (Human) protein is Cilia- and flagella-associated protein 276.